The sequence spans 826 residues: MVAPVLETSHVFCCPNRVRGVLNWSSGPRGLLAFGTSCSVVLYDPLKRVVVTNLNGHTARVNCIQWICKQDGSPSTELVSGGSDNQVIHWEIEDNQLLKAVHLQGHEGPVYAVHAVYQRRTSDPALCTLIVSAAADSAVRLWSKKGPEVMCLQTLNFGNGFALALCLSFLPNTDVPILACGNDDCRIHIFAQQNDQFQKVLSLCGHEDWIRGVEWAAFGRDLFLASCSQDCLIRIWKLYIKSTSLETQDDDNIRLKENTFTIENESVKIAFAVTLETVLAGHENWVNAVHWQPVFYKDGVLQQPVRLLSASMDKTMILWAPDEESGVWLEQVRVGEVGGNTLGFYDCQFNEDGSMIIAHAFHGALHLWKQNTVNPREWTPEIVISGHFDGVQDLVWDPEGEFIITVGTDQTTRLFAPWKRKDQSQVTWHEIARPQIHGYDLKCLAMINRFQFVSGADEKVLRVFSAPRNFVENFCAITGQSLNHVLCNQDSDLPEGATVPALGLSNKAVFQGDIASQPSDEEELLTSTGFEYQQVAFQPSILTEPPTEDHLLQNTLWPEVQKLYGHGYEIFCVTCNSSKTLLASACKAAKKEHAAIILWNTTSWKQVQNLVFHSLTVTQMAFSPNEKFLLAVSRDRTWSLWKKQDTISPEFEPVFSLFAFTNKITSVHSRIIWSCDWSPDSKYFFTGSRDKKVVVWGECDSTDDCIEHNIGPCSSVLDVGGAVTAVSVCPVLHPSQRYVVAVGLECGKICLYTWKKTDQVPEINDWTHCVETSQSQSHTLAIRKLCWKNCSGKTEQKEAEGAEWLHFASCGEDHTVKIHRVNKCAL.

WD repeat units follow at residues 13–53 (CCPN…VVTN), 56–100 (GHTA…LLKA), 105–152 (GHEG…VMCL), 158–200 (GNGF…FQKV), 205–246 (GHED…TSLE), 281–329 (GHEN…GVWL), 339–378 (GNTL…PREW), 386–425 (GHFD…DQSQ), 436–474 (IHGY…VENF), 565–609 (GHGY…QVQN), 612–651 (FHSL…SPEF), 667–706 (VHSR…DDCI), 712–753 (PCSS…CLYT), and 777–826 (SHTL…KCAL).

This sequence belongs to the WD repeat ELP2 family. Component of the elongator complex which consists of ELP1, ELP2, ELP3, ELP4, ELP5 and ELP6. Interacts with STAT3 and JAKs.

The protein resides in the cytoplasm. The protein localises to the nucleus. It functions in the pathway tRNA modification; 5-methoxycarbonylmethyl-2-thiouridine-tRNA biosynthesis. Functionally, component of the elongator complex which is required for multiple tRNA modifications, including mcm5U (5-methoxycarbonylmethyl uridine), mcm5s2U (5-methoxycarbonylmethyl-2-thiouridine), and ncm5U (5-carbamoylmethyl uridine). The elongator complex catalyzes the formation of carboxymethyluridine in the wobble base at position 34 in tRNAs. This chain is Elongator complex protein 2 (ELP2), found in Homo sapiens (Human).